The primary structure comprises 178 residues: Large ribosomal subunit protein uL5 (178 aa).

The protein belongs to the universal ribosomal protein uL5 family. As to quaternary structure, part of the 50S ribosomal subunit; part of the 5S rRNA/L5/L18/L25 subcomplex. Contacts the 5S rRNA and the P site tRNA. Forms a bridge to the 30S subunit in the 70S ribosome.

Its function is as follows. This is one of the proteins that bind and probably mediate the attachment of the 5S RNA into the large ribosomal subunit, where it forms part of the central protuberance. In the 70S ribosome it contacts protein S13 of the 30S subunit (bridge B1b), connecting the 2 subunits; this bridge is implicated in subunit movement. Contacts the P site tRNA; the 5S rRNA and some of its associated proteins might help stabilize positioning of ribosome-bound tRNAs. This chain is Large ribosomal subunit protein uL5, found in Wolbachia pipientis subsp. Culex pipiens (strain wPip).